Reading from the N-terminus, the 637-residue chain is E3 ubiquitin-protein ligase CHFR (637 aa).

The region spanning 31–82 is the FHA domain; the sequence is CTVGRKKDCDLSFPANKLVSGNHCKITHDQNSGKVWLEDMSTNGTVINMSKV. Disordered regions lie at residues 120–172 and 193–267; these read ESAS…SSSL and SSSA…EGAT. Positions 130–142 are enriched in acidic residues; sequence GREEDSDLTETES. Residues 193-210 are compositionally biased toward polar residues; sequence SSSAVCKGDSTSSGSPAQ. Residues 258-267 are compositionally biased toward basic and acidic residues; that stretch reads SGKEKTEGAT. The RING-type zinc finger occupies 277-316; sequence CIICQDLLYDCISVQPCMHTFCAACYSGWMERSSFCPTCR. Residues 428–447 are disordered; the sequence is KTAGDGPSTSSDSTTAAPQE. Positions 429 to 445 are enriched in low complexity; sequence TAGDGPSTSSDSTTAAP. A PBZ-type zinc finger spans residues 606 to 628; sequence PNCYWGRNCRTQVKAHHALKFNH.

This sequence belongs to the CHFR family.

It is found in the nucleus. Its subcellular location is the PML body. The enzyme catalyses S-ubiquitinyl-[E2 ubiquitin-conjugating enzyme]-L-cysteine + [acceptor protein]-L-lysine = [E2 ubiquitin-conjugating enzyme]-L-cysteine + N(6)-ubiquitinyl-[acceptor protein]-L-lysine.. The protein operates within protein modification; protein ubiquitination. E3 ubiquitin-protein ligase that functions in the antephase checkpoint by actively delaying passage into mitosis in response to microtubule poisons. Acts in early prophase before chromosome condensation, when the centrosome move apart from each other along the periphery of the nucleus. Probably involved in signaling the presence of mitotic stress caused by microtubule poisons by mediating the 'Lys-48'-linked ubiquitination of target proteins, leading to their degradation by the proteasome. May also promote the formation of 'Lys-63'-linked polyubiquitin chains and functions with the specific ubiquitin-conjugating ubc13-mms2 (ube2n-ube2v2) heterodimer. Substrates that are polyubiquitinated at 'Lys-63' are usually not targeted for degradation, but are rather involved in signaling cellular stress. The chain is E3 ubiquitin-protein ligase CHFR (chfr) from Danio rerio (Zebrafish).